We begin with the raw amino-acid sequence, 412 residues long: Inositol polyphosphate-5-phosphatase A (412 aa).

Residue Cys-409 is the site of S-farnesyl cysteine attachment. Residues 410–412 constitute a propeptide, removed in mature form; that stretch reads VVQ.

The protein belongs to the inositol 1,4,5-trisphosphate 5-phosphatase type I family. Interacts with TASOR. Isoprenylation at Cys-409 is required for localization at the membrane. In terms of tissue distribution, expressed at high levels in cerebellar Purkinje cells (at protein level). Expressed in Sertoli cells of the testis.

The protein resides in the cell membrane. The protein localises to the cell projection. Its subcellular location is the dendrite. The enzyme catalyses 1D-myo-inositol 1,4,5-trisphosphate + H2O = 1D-myo-inositol 1,4-bisphosphate + phosphate. It catalyses the reaction 1D-myo-inositol 1,3,4,5-tetrakisphosphate + H2O = 1D-myo-inositol 1,3,4-trisphosphate + phosphate. In terms of biological role, phosphatase that specifically hydrolyzes the 5-phosphate of inositol 1,4,5-trisphosphate to inositol 1,4-bisphosphate, and inositol 1,3,4,5-tetrasphosphate to inositol 1,3,4-trisphosphate. Plays a crucial role in the survival of cerebellar Purkinje cells. In Mus musculus (Mouse), this protein is Inositol polyphosphate-5-phosphatase A (Inpp5a).